A 107-amino-acid polypeptide reads, in one-letter code: Translation initiation factor IF-1, chloroplastic (107 aa).

In terms of domain architecture, S1-like spans 8–83 (REKKNPREAK…SKGRIIYRLP (76 aa)). Residues 81-107 (RLPHKDSKRTEDSKDTEDLKDTKDSKD) form a disordered region. A compositionally biased stretch (basic and acidic residues) spans 83–107 (PHKDSKRTEDSKDTEDLKDTKDSKD).

It belongs to the IF-1 family. Component of the 30S ribosomal translation pre-initiation complex which assembles on the 30S ribosome in the order IF-2 and IF-3, IF-1 and N-formylmethionyl-tRNA(fMet); mRNA recruitment can occur at any time during PIC assembly.

Its subcellular location is the plastid. The protein resides in the chloroplast. In terms of biological role, one of the essential components for the initiation of protein synthesis. Stabilizes the binding of IF-2 and IF-3 on the 30S subunit to which N-formylmethionyl-tRNA(fMet) subsequently binds. Helps modulate mRNA selection, yielding the 30S pre-initiation complex (PIC). Upon addition of the 50S ribosomal subunit IF-1, IF-2 and IF-3 are released leaving the mature 70S translation initiation complex. In Saccharum hybrid (Sugarcane), this protein is Translation initiation factor IF-1, chloroplastic.